A 339-amino-acid chain; its full sequence is Serine racemase (339 aa).

Serine 43 and lysine 63 together coordinate ATP. Lysine 68 acts as the Proton acceptor in catalysis. Residue lysine 68 is modified to N6-(pyridoxal phosphate)lysine. Residue threonine 90 coordinates Ca(2+). The active-site Proton acceptor is the serine 93. Residue asparagine 95 participates in pyridoxal 5'-phosphate binding. Residue cysteine 122 is modified to S-nitrosocysteine. Tyrosine 130 contributes to the ATP binding site. A Mg(2+)-binding site is contributed by aspartate 187. Pyridoxal 5'-phosphate is bound by residues glycine 195, glycine 196, and glycine 197. Residues glutamate 219, alanine 223, and aspartate 225 each contribute to the Ca(2+) site. Residues glutamate 219, alanine 223, and aspartate 225 each coordinate Mg(2+). Mn(2+) is bound by residues glutamate 219, alanine 223, and aspartate 225. Lysine 287 lines the ATP pocket. Position 323 (serine 323) interacts with pyridoxal 5'-phosphate. Asparagine 326 lines the ATP pocket.

This sequence belongs to the serine/threonine dehydratase family. The cofactor is Mg(2+). It depends on Mn(2+) as a cofactor. Requires Ca(2+) as cofactor. Pyridoxal 5'-phosphate is required as a cofactor.

It catalyses the reaction L-serine = D-serine. The enzyme catalyses L-serine = pyruvate + NH4(+). It carries out the reaction D-serine = pyruvate + NH4(+). Its function is as follows. Catalyzes the synthesis of D-serine from L-serine. Has dehydratase activity towards both L-serine and D-serine. The polypeptide is Serine racemase (Oryza sativa subsp. indica (Rice)).